The sequence spans 306 residues: SDS degradation transcriptional activation protein (306 aa).

Residues 1-59 enclose the HTH lysR-type domain; that stretch reads MNDLRQLRHFVALAEHGHFARAAEAVNLSQPALSRSIQALENGLGCRLLDRGPRQVSLT. The segment at residues 19-38 is a DNA-binding region (H-T-H motif); the sequence is FARAAEAVNLSQPALSRSIQ.

The protein belongs to the LysR transcriptional regulatory family.

In terms of biological role, activates the transcription of the sdsA gene for sodium dodecyl sulfate (SDS) degradation. The protein is SDS degradation transcriptional activation protein (sdsB) of Pseudomonas sp. (strain ATCC 19151).